We begin with the raw amino-acid sequence, 440 residues long: Thymidine phosphorylase (440 aa).

It belongs to the thymidine/pyrimidine-nucleoside phosphorylase family. Homodimer.

It carries out the reaction thymidine + phosphate = 2-deoxy-alpha-D-ribose 1-phosphate + thymine. Its pathway is pyrimidine metabolism; dTMP biosynthesis via salvage pathway; dTMP from thymine: step 1/2. Its function is as follows. The enzymes which catalyze the reversible phosphorolysis of pyrimidine nucleosides are involved in the degradation of these compounds and in their utilization as carbon and energy sources, or in the rescue of pyrimidine bases for nucleotide synthesis. The chain is Thymidine phosphorylase from Salmonella dublin (strain CT_02021853).